The primary structure comprises 359 residues: Aminomethyltransferase (359 aa).

This sequence belongs to the GcvT family. In terms of assembly, the glycine cleavage system is composed of four proteins: P, T, L and H.

It carries out the reaction N(6)-[(R)-S(8)-aminomethyldihydrolipoyl]-L-lysyl-[protein] + (6S)-5,6,7,8-tetrahydrofolate = N(6)-[(R)-dihydrolipoyl]-L-lysyl-[protein] + (6R)-5,10-methylene-5,6,7,8-tetrahydrofolate + NH4(+). Its function is as follows. The glycine cleavage system catalyzes the degradation of glycine. This Pseudoalteromonas atlantica (strain T6c / ATCC BAA-1087) protein is Aminomethyltransferase.